The chain runs to 468 residues: Cysteine--tRNA ligase (468 aa).

Cys-29 is a binding site for Zn(2+). The short motif at 31–41 (PTVYNYIHIGN) is the 'HIGH' region element. Zn(2+) is bound by residues Cys-209, His-234, and Glu-238. The short motif at 266–270 (KMSKS) is the 'KMSKS' region element. Residue Lys-269 coordinates ATP.

This sequence belongs to the class-I aminoacyl-tRNA synthetase family. Monomer. Zn(2+) is required as a cofactor.

The protein resides in the cytoplasm. The enzyme catalyses tRNA(Cys) + L-cysteine + ATP = L-cysteinyl-tRNA(Cys) + AMP + diphosphate. The sequence is that of Cysteine--tRNA ligase from Brevibacillus brevis (strain 47 / JCM 6285 / NBRC 100599).